The primary structure comprises 125 residues: Holo-[acyl-carrier-protein] synthase (125 aa).

Residues Asp-8 and Glu-57 each contribute to the Mg(2+) site.

It belongs to the P-Pant transferase superfamily. AcpS family. Mg(2+) is required as a cofactor.

Its subcellular location is the cytoplasm. The catalysed reaction is apo-[ACP] + CoA = holo-[ACP] + adenosine 3',5'-bisphosphate + H(+). Functionally, transfers the 4'-phosphopantetheine moiety from coenzyme A to a Ser of acyl-carrier-protein. The chain is Holo-[acyl-carrier-protein] synthase from Nitrosospira multiformis (strain ATCC 25196 / NCIMB 11849 / C 71).